Reading from the N-terminus, the 71-residue chain is Large ribosomal subunit protein bL31 (71 aa).

Residues Cys-16, Cys-18, Cys-36, and Cys-39 each coordinate Zn(2+).

The protein belongs to the bacterial ribosomal protein bL31 family. Type A subfamily. As to quaternary structure, part of the 50S ribosomal subunit. Requires Zn(2+) as cofactor.

Binds the 23S rRNA. The sequence is that of Large ribosomal subunit protein bL31 from Thermus thermophilus (strain ATCC BAA-163 / DSM 7039 / HB27).